Here is a 66-residue protein sequence, read N- to C-terminus: Large ribosomal subunit protein eL24 (66 aa).

Residues C6, C9, C32, and C36 each coordinate Zn(2+). The C4-type zinc finger occupies 6-36 (CSFCGKSIEPASGFLYVRKDGSVLNFCSRKC).

It belongs to the eukaryotic ribosomal protein eL24 family. In terms of assembly, part of the 50S ribosomal subunit. Forms a cluster with proteins L3 and L14. The cofactor is Zn(2+).

Functionally, binds to the 23S rRNA. This chain is Large ribosomal subunit protein eL24, found in Picrophilus torridus (strain ATCC 700027 / DSM 9790 / JCM 10055 / NBRC 100828 / KAW 2/3).